Here is a 69-residue protein sequence, read N- to C-terminus: Disintegrin EC6 subunit beta (69 aa).

The Disintegrin domain maps to 1 to 65 (NSVHPCCDPV…DCPPNPWNGK (65 aa)). Intrachain disulfides connect C6/C29, C20/C26, C25/C50, and C38/C57. The short motif at 42–44 (RGD) is the Cell attachment site element.

Belongs to the venom metalloproteinase (M12B) family. P-II subfamily. P-IIe sub-subfamily. As to quaternary structure, heterodimer with subunit alpha; disulfide-linked. In terms of tissue distribution, expressed by the venom gland.

Its subcellular location is the secreted. In terms of biological role, potently inhibits adhesion of alpha-4/beta-1 (ITGA4/ITGB1) and alpha-9/beta-1 (ITGA9/ITGB1) integrins to VCAM1, and adhesion of alpha-5/beta-1 (ITGA5/ITGB1) integrin to fibronectin. Has a much less effect on alpha-IIb/beta-3 (ITGA2B/ITGB3) integrin. Also potently inhibits neutrophil migration across TNF-alpha-activated human umbilical endothelial cells. This Echis carinatus sochureki (Saw-scaled viper) protein is Disintegrin EC6 subunit beta.